Here is a 195-residue protein sequence, read N- to C-terminus: Endoribonuclease YbeY (195 aa).

Residues histidine 152, histidine 156, and histidine 162 each coordinate Zn(2+).

The protein belongs to the endoribonuclease YbeY family. Zn(2+) serves as cofactor.

It localises to the cytoplasm. In terms of biological role, single strand-specific metallo-endoribonuclease involved in late-stage 70S ribosome quality control and in maturation of the 3' terminus of the 16S rRNA. This is Endoribonuclease YbeY from Rhodopseudomonas palustris (strain BisB5).